The sequence spans 61 residues: Temporin-MT3 (61 aa).

The signal sequence occupies residues 1–22 (MFTLKKPLLLLFFLGTINLSLC). The propeptide at 23 to 44 (EQERNAEEERRDEPDERNAEVE) is removed in mature form. Residue L59 is modified to Leucine amide.

The protein belongs to the frog skin active peptide (FSAP) family. Temporin subfamily. Expressed by the skin glands.

It is found in the secreted. Its function is as follows. Antimicrobial peptide. The sequence is that of Temporin-MT3 from Amolops mantzorum (Sichuan torrent frog).